A 212-amino-acid chain; its full sequence is Thymidylate kinase (212 aa).

Position 11-18 (11-18 (GPEGAGKT)) interacts with ATP.

Belongs to the thymidylate kinase family.

It catalyses the reaction dTMP + ATP = dTDP + ADP. Its function is as follows. Phosphorylation of dTMP to form dTDP in both de novo and salvage pathways of dTTP synthesis. This is Thymidylate kinase from Streptococcus pneumoniae (strain P1031).